Here is a 312-residue protein sequence, read N- to C-terminus: Pantothenate kinase (312 aa).

97 to 104 lines the ATP pocket; it reads GSVAVGKS.

Belongs to the prokaryotic pantothenate kinase family.

It is found in the cytoplasm. The catalysed reaction is (R)-pantothenate + ATP = (R)-4'-phosphopantothenate + ADP + H(+). It functions in the pathway cofactor biosynthesis; coenzyme A biosynthesis; CoA from (R)-pantothenate: step 1/5. This chain is Pantothenate kinase, found in Mycolicibacterium vanbaalenii (strain DSM 7251 / JCM 13017 / BCRC 16820 / KCTC 9966 / NRRL B-24157 / PYR-1) (Mycobacterium vanbaalenii).